Consider the following 275-residue polypeptide: Large ribosomal subunit protein uL2 (275 aa).

A disordered region spans residues 221–275 (VRGVAMNPVDHPMGGGEGKSSGGRHPCSPWGQQSKGVRTRNNKRTDQFIVKRRSK).

This sequence belongs to the universal ribosomal protein uL2 family. Part of the 50S ribosomal subunit. Forms a bridge to the 30S subunit in the 70S ribosome.

Its function is as follows. One of the primary rRNA binding proteins. Required for association of the 30S and 50S subunits to form the 70S ribosome, for tRNA binding and peptide bond formation. It has been suggested to have peptidyltransferase activity; this is somewhat controversial. Makes several contacts with the 16S rRNA in the 70S ribosome. This chain is Large ribosomal subunit protein uL2, found in Desulfosudis oleivorans (strain DSM 6200 / JCM 39069 / Hxd3) (Desulfococcus oleovorans).